A 259-amino-acid chain; its full sequence is Acyl-[acyl-carrier-protein]--UDP-N-acetylglucosamine O-acyltransferase (259 aa).

Belongs to the transferase hexapeptide repeat family. LpxA subfamily. Homotrimer.

The protein resides in the cytoplasm. The enzyme catalyses a (3R)-hydroxyacyl-[ACP] + UDP-N-acetyl-alpha-D-glucosamine = a UDP-3-O-[(3R)-3-hydroxyacyl]-N-acetyl-alpha-D-glucosamine + holo-[ACP]. Its pathway is glycolipid biosynthesis; lipid IV(A) biosynthesis; lipid IV(A) from (3R)-3-hydroxytetradecanoyl-[acyl-carrier-protein] and UDP-N-acetyl-alpha-D-glucosamine: step 1/6. Its function is as follows. Involved in the biosynthesis of lipid A, a phosphorylated glycolipid that anchors the lipopolysaccharide to the outer membrane of the cell. In Nautilia profundicola (strain ATCC BAA-1463 / DSM 18972 / AmH), this protein is Acyl-[acyl-carrier-protein]--UDP-N-acetylglucosamine O-acyltransferase.